The primary structure comprises 147 residues: Hemoglobin subunit beta-H1 (147 aa).

The Globin domain maps to 3–147; that stretch reads HFTAEEKAAI…VANALSHKYH (145 aa). The heme b site is built by His64 and His93.

It belongs to the globin family. In terms of assembly, heterotetramer of two alpha chains and two beta chains. As to expression, red blood cells.

This is an embryonic beta-type chain. The protein is Hemoglobin subunit beta-H1 (Hbb-bh1) of Mus musculus (Mouse).